A 288-amino-acid polypeptide reads, in one-letter code: Acetyl-coenzyme A carboxylase carboxyl transferase subunit beta (288 aa).

In terms of domain architecture, CoA carboxyltransferase N-terminal spans 34 to 288 (LFAKCPACKH…HLVAFHGGGQ (255 aa)). 4 residues coordinate Zn(2+): cysteine 38, cysteine 41, cysteine 56, and cysteine 59. The C4-type zinc-finger motif lies at 38 to 59 (CPACKHMIYKKDLGLAKICPTC).

This sequence belongs to the AccD/PCCB family. In terms of assembly, acetyl-CoA carboxylase is a heterohexamer composed of biotin carboxyl carrier protein (AccB), biotin carboxylase (AccC) and two subunits each of ACCase subunit alpha (AccA) and ACCase subunit beta (AccD). Zn(2+) is required as a cofactor.

The protein localises to the cytoplasm. It catalyses the reaction N(6)-carboxybiotinyl-L-lysyl-[protein] + acetyl-CoA = N(6)-biotinyl-L-lysyl-[protein] + malonyl-CoA. Its pathway is lipid metabolism; malonyl-CoA biosynthesis; malonyl-CoA from acetyl-CoA: step 1/1. Functionally, component of the acetyl coenzyme A carboxylase (ACC) complex. Biotin carboxylase (BC) catalyzes the carboxylation of biotin on its carrier protein (BCCP) and then the CO(2) group is transferred by the transcarboxylase to acetyl-CoA to form malonyl-CoA. This chain is Acetyl-coenzyme A carboxylase carboxyl transferase subunit beta, found in Streptococcus pyogenes serotype M28 (strain MGAS6180).